The chain runs to 143 residues: Large ribosomal subunit protein uL15 (143 aa).

Basic residues-rich tracts occupy residues 1-13 (MIRK…KMRG) and 23-38 (KKHR…GNAG). A disordered region spans residues 1–38 (MIRKSKKITKMRGSRTCGYGEAKKHRGAGHRGGRGNAG).

Belongs to the universal ribosomal protein uL15 family. Part of the 50S ribosomal subunit.

Binds to the 23S rRNA. This chain is Large ribosomal subunit protein uL15, found in Methanococcus maripaludis (strain C7 / ATCC BAA-1331).